Reading from the N-terminus, the 1096-residue chain is Inactive phospholipase C-like protein 1 (1096 aa).

Residues 1–101 (MAEGAASREA…KKTVSFSSMP (101 aa)) are disordered. Phosphoserine is present on S48. Positions 49 to 60 (GVALPGAAGVPA) are enriched in low complexity. Residue S78 is modified to Phosphoserine. Positions 83–222 (PSNQKCGGRK…NIWVSGLRYL (140 aa)) are interaction with PPP1C. Position 94 is a phosphothreonine (T94). A Phosphothreonine; by PKA modification is found at T94. S96 carries the phosphoserine; by PKA modification. A PH domain is found at 114-224 (SFMQAGCELK…WVSGLRYLVS (111 aa)). The 145-residue stretch at 399 to 543 (QDMTQPLSHY…LKNMIIVKGK (145 aa)) folds into the PI-PLC X-box domain. The segment at 544–568 (KLPSESDLLEGEVTDEDEEAEMSRR) is interaction with GABA A beta subunit. A compositionally biased stretch (acidic residues) spans 550-563 (DLLEGEVTDEDEEA). A disordered region spans residues 550–569 (DLLEGEVTDEDEEAEMSRRM). T557 bears the Phosphothreonine mark. S570 carries the phosphoserine modification. The 117-residue stretch at 586–702 (LSDLVSICKS…GYVLRPSIMR (117 aa)) folds into the PI-PLC Y-box domain. The region spanning 702–831 (RDEVSYFSAN…PGYRHVPLRS (130 aa)) is the C2 domain. A coiled-coil region spans residues 1040–1060 (DLLKNAKNEAVENIKQIQLAC). The disordered stretch occupies residues 1067–1096 (KGPGGGSEAKGKRSLEAIEEKESSEENGKL). The span at 1075–1096 (AKGKRSLEAIEEKESSEENGKL) shows a compositional bias: basic and acidic residues. S1080 carries the phosphoserine modification.

Interacts with PPP2CA, Ins(1,4,5)P3, Ins(1,4,5,6)P4 GABARAP, GABA receptor beta subunits, GABA receptor gamma-2 subunits and PPP1C. May form a ternary complex with GABA receptor beta subunit and GABARAP. The formation of a ternary complex with GABA receptor beta subunit and GABARAP could be the key step for facilitating the association of GABARAP with the GABA receptor gamma-2 subunit and to allow it to be transported at the right destination. Phosphorylated by the catalytic subunit of PKA. Phosphorylation of Thr-94 resulted in dissociation of PPP1C from PRIP1.

Its subcellular location is the cytoplasm. Involved in an inositol phospholipid-based intracellular signaling cascade. Shows no PLC activity to phosphatidylinositol 4,5-bisphosphate and phosphatidylinositol. Component in the phospho-dependent endocytosis process of GABA A receptor. Acts as an inhibitor of PPP1C. Involved in the assembly and/or the trafficking of gamma-2 subunit-containing GABA A receptors. The chain is Inactive phospholipase C-like protein 1 (Plcl1) from Mus musculus (Mouse).